We begin with the raw amino-acid sequence, 267 residues long: Regulatory protein RecX (267 aa).

The protein belongs to the RecX family.

It localises to the cytoplasm. In terms of biological role, modulates RecA activity. The sequence is that of Regulatory protein RecX from Leuconostoc mesenteroides subsp. mesenteroides (strain ATCC 8293 / DSM 20343 / BCRC 11652 / CCM 1803 / JCM 6124 / NCDO 523 / NBRC 100496 / NCIMB 8023 / NCTC 12954 / NRRL B-1118 / 37Y).